Reading from the N-terminus, the 146-residue chain is Large ribosomal subunit protein uL15 (146 aa).

The segment at 1 to 55 is disordered; the sequence is MGLRLNELSPGVGAKKTAQRRGRGIGSGLGKTGGRGVKGQKSRSGSSIRSGFEGG. The segment covering 24 to 37 has biased composition (gly residues); the sequence is GIGSGLGKTGGRGV.

It belongs to the universal ribosomal protein uL15 family. Part of the 50S ribosomal subunit.

Functionally, binds to the 23S rRNA. The sequence is that of Large ribosomal subunit protein uL15 from Psychrobacter cryohalolentis (strain ATCC BAA-1226 / DSM 17306 / VKM B-2378 / K5).